The sequence spans 126 residues: Small ribosomal subunit protein uS13 (126 aa).

The segment at 94-126 (GLPVRGQKTRNNAHTVKGKPKAAIAGKKKNKVN) is disordered. A compositionally biased stretch (basic residues) spans 109–126 (VKGKPKAAIAGKKKNKVN).

This sequence belongs to the universal ribosomal protein uS13 family. As to quaternary structure, part of the 30S ribosomal subunit. Forms a loose heterodimer with protein S19. Forms two bridges to the 50S subunit in the 70S ribosome.

Functionally, located at the top of the head of the 30S subunit, it contacts several helices of the 16S rRNA. In the 70S ribosome it contacts the 23S rRNA (bridge B1a) and protein L5 of the 50S subunit (bridge B1b), connecting the 2 subunits; these bridges are implicated in subunit movement. Contacts the tRNAs in the A and P-sites. The protein is Small ribosomal subunit protein uS13 of Aster yellows witches'-broom phytoplasma (strain AYWB).